A 167-amino-acid chain; its full sequence is Cell number regulator 3 (167 aa).

Residues 67–84 (GMTSCGTSAALFALIQWL) form a helical membrane-spanning segment.

The protein belongs to the cornifelin family. As to expression, expressed only in pollen.

The protein localises to the membrane. The protein is Cell number regulator 3 (CNR3) of Zea mays (Maize).